The following is a 648-amino-acid chain: Bifunctional protein TilS/HprT (648 aa).

Position 29–34 (29–34) interacts with ATP; that stretch reads SGGPDS. Residue D627 coordinates Mg(2+).

In the N-terminal section; belongs to the tRNA(Ile)-lysidine synthase family. This sequence in the C-terminal section; belongs to the purine/pyrimidine phosphoribosyltransferase family. Mg(2+) serves as cofactor.

Its subcellular location is the cytoplasm. It carries out the reaction IMP + diphosphate = hypoxanthine + 5-phospho-alpha-D-ribose 1-diphosphate. The enzyme catalyses GMP + diphosphate = guanine + 5-phospho-alpha-D-ribose 1-diphosphate. The catalysed reaction is cytidine(34) in tRNA(Ile2) + L-lysine + ATP = lysidine(34) in tRNA(Ile2) + AMP + diphosphate + H(+). Its function is as follows. Ligates lysine onto the cytidine present at position 34 of the AUA codon-specific tRNA(Ile) that contains the anticodon CAU, in an ATP-dependent manner. Cytidine is converted to lysidine, thus changing the amino acid specificity of the tRNA from methionine to isoleucine. This is Bifunctional protein TilS/HprT (tilS/hprT) from Listeria innocua serovar 6a (strain ATCC BAA-680 / CLIP 11262).